We begin with the raw amino-acid sequence, 89 residues long: Small ribosomal subunit protein uS15 (89 aa).

Residues 1 to 21 are compositionally biased toward basic and acidic residues; it reads MALSKEQKTETLKEFGLHETD. The interval 1-22 is disordered; it reads MALSKEQKTETLKEFGLHETDT.

This sequence belongs to the universal ribosomal protein uS15 family. Part of the 30S ribosomal subunit. Forms a bridge to the 50S subunit in the 70S ribosome, contacting the 23S rRNA.

Functionally, one of the primary rRNA binding proteins, it binds directly to 16S rRNA where it helps nucleate assembly of the platform of the 30S subunit by binding and bridging several RNA helices of the 16S rRNA. Its function is as follows. Forms an intersubunit bridge (bridge B4) with the 23S rRNA of the 50S subunit in the ribosome. This is Small ribosomal subunit protein uS15 from Corynebacterium jeikeium (strain K411).